The primary structure comprises 1083 residues: Error-prone DNA polymerase (1083 aa).

Belongs to the DNA polymerase type-C family. DnaE2 subfamily.

The protein resides in the cytoplasm. It catalyses the reaction DNA(n) + a 2'-deoxyribonucleoside 5'-triphosphate = DNA(n+1) + diphosphate. Its function is as follows. DNA polymerase involved in damage-induced mutagenesis and translesion synthesis (TLS). It is not the major replicative DNA polymerase. The protein is Error-prone DNA polymerase of Xanthomonas oryzae pv. oryzae (strain PXO99A).